A 563-amino-acid chain; its full sequence is Arginine--tRNA ligase (563 aa).

The 'HIGH' region signature appears at 121–131 (PNIAKPFSIGH).

Belongs to the class-I aminoacyl-tRNA synthetase family. In terms of assembly, monomer.

It is found in the cytoplasm. It carries out the reaction tRNA(Arg) + L-arginine + ATP = L-arginyl-tRNA(Arg) + AMP + diphosphate. The sequence is that of Arginine--tRNA ligase from Streptococcus thermophilus (strain ATCC BAA-250 / LMG 18311).